The following is a 286-amino-acid chain: Bifunctional protein FolD (286 aa).

NADP(+)-binding positions include 164-166 (GRS), serine 193, and isoleucine 234.

Belongs to the tetrahydrofolate dehydrogenase/cyclohydrolase family. In terms of assembly, homodimer.

The enzyme catalyses (6R)-5,10-methylene-5,6,7,8-tetrahydrofolate + NADP(+) = (6R)-5,10-methenyltetrahydrofolate + NADPH. It catalyses the reaction (6R)-5,10-methenyltetrahydrofolate + H2O = (6R)-10-formyltetrahydrofolate + H(+). It participates in one-carbon metabolism; tetrahydrofolate interconversion. Catalyzes the oxidation of 5,10-methylenetetrahydrofolate to 5,10-methenyltetrahydrofolate and then the hydrolysis of 5,10-methenyltetrahydrofolate to 10-formyltetrahydrofolate. The protein is Bifunctional protein FolD of Oleidesulfovibrio alaskensis (strain ATCC BAA-1058 / DSM 17464 / G20) (Desulfovibrio alaskensis).